A 43-amino-acid chain; its full sequence is uncharacterized protein (43 aa).

Residues 1-43 are disordered; sequence MFKSRIETGGFQFQVHGDDESAMDDEFIDDDDDQQVVEPVTDN. The span at 20-35 shows a compositional bias: acidic residues; it reads ESAMDDEFIDDDDDQQ.

This is an uncharacterized protein from Dictyostelium discoideum (Social amoeba).